The primary structure comprises 108 residues: MSYQQQQCKQPCQPPPVCPPPQCPEPCPPPKCPEPCPPPKCTEPCPPPKCPEPCPPPKCPEPCPPPKCPEPCPPPKCTEPCPPPSYQQKCPSVQPSPPCQQKCPPKNK.

The segment covering 1 to 11 has biased composition (low complexity); that stretch reads MSYQQQQCKQP. Positions 1–22 are disordered; it reads MSYQQQQCKQPCQPPPVCPPPQ. Positions 12–22 are enriched in pro residues; that stretch reads CQPPPVCPPPQ. Repeat copies occupy residues 21 to 29, 30 to 38, 39 to 47, 48 to 56, 57 to 65, 66 to 74, and 75 to 83. The 7 X 9 AA tandem repeats of P-[KQ]-C-[PT]-E-P-C-P-P stretch occupies residues 21-83; sequence PQCPEPCPPP…PPKCTEPCPP (63 aa). A disordered region spans residues 83 to 108; sequence PPSYQQKCPSVQPSPPCQQKCPPKNK. A compositionally biased stretch (low complexity) spans 87–108; that stretch reads QQKCPSVQPSPPCQQKCPPKNK.

Belongs to the cornifin (SPRR) family. As to expression, expressed weakly in uterus.

It is found in the cytoplasm. Its function is as follows. Cross-linked envelope protein of keratinocytes. It is a keratinocyte protein that first appears in the cell cytosol, but ultimately becomes cross-linked to membrane proteins by transglutaminase. All that results in the formation of an insoluble envelope beneath the plasma membrane. The sequence is that of Small proline-rich protein 2H (Sprr2h) from Mus musculus (Mouse).